Consider the following 910-residue polypeptide: Dynein axonemal assembly factor 1 homolog (910 aa).

LRR repeat units follow at residues 43–64 (GLKC…DHQS), 65–86 (QLRC…QHCK), 87–108 (QLDT…GSDI), 111–132 (VLNT…AELR), and 136–157 (FVSV…KVLA). An LRRCT domain is found at 171-209 (PVVNDIPSYRKTLILECKSLTYLDSRPVFDKDRACAEAW). Over residues 217 to 230 (ERKEHQRWKKEEQR) the composition is skewed to basic and acidic residues. Disordered regions lie at residues 217-275 (ERKE…GDFE), 297-332 (TKGD…DPTL), 344-399 (SRAC…GSIL), 620-642 (EQVP…PVDQ), 662-682 (QVEV…IPEE), and 855-910 (EELE…QGDH). Residues 314–331 (STNSVDYITGSDSNSDPT) are compositionally biased toward polar residues. Residues 380-389 (SLSDSSSSSS) show a composition bias toward low complexity. Basic and acidic residues predominate over residues 620–633 (EQVPDEVEANDKAS). Over residues 855 to 865 (EELEELNEEED) the composition is skewed to acidic residues. The span at 866-878 (PALKEAGDFKHDE) shows a compositional bias: basic and acidic residues.

This sequence belongs to the DNAAF1 family.

The protein localises to the cell projection. The protein resides in the cilium. Its function is as follows. Cilium-specific protein required for cilia structures. This is Dynein axonemal assembly factor 1 homolog from Anopheles gambiae (African malaria mosquito).